The primary structure comprises 430 residues: Enolase (430 aa).

Position 167 (Gln167) interacts with (2R)-2-phosphoglycerate. Glu209 (proton donor) is an active-site residue. The Mg(2+) site is built by Asp245, Glu286, and Asp313. (2R)-2-phosphoglycerate contacts are provided by Lys338, Arg367, Ser368, and Lys389. Residue Lys338 is the Proton acceptor of the active site.

Belongs to the enolase family. Mg(2+) is required as a cofactor.

It is found in the cytoplasm. Its subcellular location is the secreted. The protein localises to the cell surface. It carries out the reaction (2R)-2-phosphoglycerate = phosphoenolpyruvate + H2O. It participates in carbohydrate degradation; glycolysis; pyruvate from D-glyceraldehyde 3-phosphate: step 4/5. Catalyzes the reversible conversion of 2-phosphoglycerate (2-PG) into phosphoenolpyruvate (PEP). It is essential for the degradation of carbohydrates via glycolysis. The protein is Enolase of Synechococcus sp. (strain WH7803).